The following is a 280-amino-acid chain: Cycloeucalenol cycloisomerase (280 aa).

Transmembrane regions (helical) follow at residues L22 to Y42, Y53 to G73, A89 to F109, F167 to I187, M201 to F221, and A244 to L264.

Its subcellular location is the membrane. It carries out the reaction cycloeucalenol = obtusifoliol. In terms of biological role, converts pentacyclic cyclopropyl sterols to tetracyclic sterols. The sequence is that of Cycloeucalenol cycloisomerase (CPI1) from Arabidopsis thaliana (Mouse-ear cress).